Here is a 144-residue protein sequence, read N- to C-terminus: Large ribosomal subunit protein uL11 (144 aa).

Belongs to the universal ribosomal protein uL11 family. Part of the ribosomal stalk of the 50S ribosomal subunit. Interacts with L10 and the large rRNA to form the base of the stalk. L10 forms an elongated spine to which L12 dimers bind in a sequential fashion forming a multimeric L10(L12)X complex. Post-translationally, one or more lysine residues are methylated.

In terms of biological role, forms part of the ribosomal stalk which helps the ribosome interact with GTP-bound translation factors. The polypeptide is Large ribosomal subunit protein uL11 (Rhodococcus opacus (strain B4)).